We begin with the raw amino-acid sequence, 206 residues long: Ribosomal RNA large subunit methyltransferase E (206 aa).

5 residues coordinate S-adenosyl-L-methionine: Gly-63, Trp-65, Asp-83, Asp-99, and Asp-124. The Proton acceptor role is filled by Lys-164.

It belongs to the class I-like SAM-binding methyltransferase superfamily. RNA methyltransferase RlmE family.

The protein resides in the cytoplasm. It catalyses the reaction uridine(2552) in 23S rRNA + S-adenosyl-L-methionine = 2'-O-methyluridine(2552) in 23S rRNA + S-adenosyl-L-homocysteine + H(+). In terms of biological role, specifically methylates the uridine in position 2552 of 23S rRNA at the 2'-O position of the ribose in the fully assembled 50S ribosomal subunit. The protein is Ribosomal RNA large subunit methyltransferase E of Buchnera aphidicola subsp. Acyrthosiphon pisum (strain APS) (Acyrthosiphon pisum symbiotic bacterium).